We begin with the raw amino-acid sequence, 101 residues long: Urease subunit beta (101 aa).

The protein belongs to the urease beta subunit family. Heterotrimer of UreA (gamma), UreB (beta) and UreC (alpha) subunits. Three heterotrimers associate to form the active enzyme.

The protein localises to the cytoplasm. It carries out the reaction urea + 2 H2O + H(+) = hydrogencarbonate + 2 NH4(+). It participates in nitrogen metabolism; urea degradation; CO(2) and NH(3) from urea (urease route): step 1/1. The sequence is that of Urease subunit beta from Burkholderia mallei (strain NCTC 10247).